A 445-amino-acid polypeptide reads, in one-letter code: uncharacterized protein (445 aa).

A run of 8 helical transmembrane segments spans residues 16–36 (IVSLGVTASSFLFINGVAFLI), 52–72 (LLASMPSWGLVVTMFAWGYLL), 98–118 (VHSLLWIGVFLFLGGMAAGGC), 168–188 (GLMFPAVVCTLAAVASVLGIV), 219–239 (ASALLMMPQTVTVTFMLVWLI), 243–263 (GWSVAQAGVLVTISQLLGALG), 283–303 (LIAAAAAATLFLLAAVDNEGS), and 366–386 (AAYPTAWALCGVFPLAAVPLV). Residues 417–445 (AWPNGPRRPGPPGQPRRVRQGGTAITPPT) form a disordered region.

It belongs to the major facilitator superfamily.

The protein localises to the cell membrane. This is an uncharacterized protein from Mycobacterium tuberculosis (strain ATCC 25618 / H37Rv).